Here is a 209-residue protein sequence, read N- to C-terminus: NADH-ubiquinone oxidoreductase subunit 9 (209 aa).

Belongs to the complex I 30 kDa subunit family. As to quaternary structure, complex I is composed of about 30 different subunits.

The protein localises to the mitochondrion inner membrane. It catalyses the reaction a ubiquinone + NADH + 5 H(+)(in) = a ubiquinol + NAD(+) + 4 H(+)(out). Core subunit of the mitochondrial membrane respiratory chain NADH dehydrogenase (Complex I) that is believed to belong to the minimal assembly required for catalysis. Complex I functions in the transfer of electrons from NADH to the respiratory chain. The immediate electron acceptor for the enzyme is believed to be ubiquinone. This chain is NADH-ubiquinone oxidoreductase subunit 9 (NAD9), found in Paramecium primaurelia.